A 139-amino-acid chain; its full sequence is Oocyte zinc finger protein XlCOF14 (139 aa).

5 C2H2-type zinc fingers span residues 6–28 (FICS…SNVH), 33–55 (FPCT…QKIH), 61–83 (HKCT…HLSH), 89–111 (FSCF…QLSH), and 117–139 (FVCS…CHIH).

This sequence belongs to the krueppel C2H2-type zinc-finger protein family.

It localises to the nucleus. Functionally, may be involved in transcriptional regulation. In Xenopus laevis (African clawed frog), this protein is Oocyte zinc finger protein XlCOF14.